A 30-amino-acid polypeptide reads, in one-letter code: Tail tubular protein A (30 aa).

In Escherichia coli (Bacteriophage T3), this protein is Tail tubular protein A (11).